Reading from the N-terminus, the 380-residue chain is Rab9 effector protein with kelch motifs (380 aa).

6 Kelch repeats span residues 57-103 (KIFI…FLPS), 108-154 (SIWV…TSSA), 159-211 (QLYV…AAGT), 212-258 (KLFI…AAVA), 262-311 (HVYM…VIPW), and 357-380 (LCFV…TVVD).

In terms of assembly, interacts with PIKFYVE; the interaction recruits RABEPK to the endosomal membrane. Interacts with RAB9 in its GTP-bound conformation. Post-translationally, phosphorylated on Ser residues by PIKFYVE.

The protein resides in the cytoplasm. Its subcellular location is the endosome membrane. Rab9 effector required for endosome to trans-Golgi network (TGN) transport. This chain is Rab9 effector protein with kelch motifs, found in Mus musculus (Mouse).